Here is a 360-residue protein sequence, read N- to C-terminus: Mitogen-activated protein kinase 1 (360 aa).

A2 is modified (N-acetylalanine). One can recognise a Protein kinase domain in the interval Y25–L313. S29 bears the Phosphoserine; by SGK1 mark. ATP contacts are provided by residues I31–V39 and K54. Catalysis depends on D149, which acts as the Proton acceptor. T185 is modified (phosphothreonine; by MAP2K1 and MAP2K2). The short motif at T185–Y187 is the TXY element. The residue at position 187 (Y187) is a Phosphotyrosine; by MAP2K1 and MAP2K2. The residue at position 190 (T190) is a Phosphothreonine; by autocatalysis. Phosphoserine occurs at positions 246, 248, and 284.

Belongs to the protein kinase superfamily. CMGC Ser/Thr protein kinase family. MAP kinase subfamily. In terms of assembly, binds both upstream activators and downstream substrates in multimolecular complexes. Interacts with ADAM15, ARHGEF2, ARRB2, DAPK1 (via death domain), HSF4, IER3, IPO7, MKNK2, MORG1, NISCH, PEA15, SGK1, and isoform 1 of NEK2. Interacts (via phosphorylated form) with TPR (via C-terminal region and phosphorylated form); the interaction requires dimerization of MAPK1/ERK2 and increases following EGF stimulation. Interacts with MAP2K1. Interacts with DUSP6. Interacts (phosphorylated form) with CAV2 ('Tyr-19'-phosphorylated form); the interaction, promoted by insulin, leads to nuclear location and MAPK1 activation. MKNK2 isoform 1 binding prevents from dephosphorylation and inactivation. Interacts with DCC. The phosphorylated form interacts with PML. Interacts with STYX. Interacts with CDK2AP2. Interacts with CAVIN4. Interacts with DUSP7; the interaction enhances DUSP7 phosphatase activity. Interacts with GIT1; this interaction is necessary for MAPK1 localization to focal adhesions. Interacts with ZNF263. Interacts with phosphoglycerate kinase PGK1; the interaction is direct, occurs under hypoxic conditions, and promotes interaction between PGK1 and PIN1. Requires Mg(2+) as cofactor. Dually phosphorylated on Thr-185 and Tyr-187, which activates the enzyme. Phosphorylated upon FLT3 and KIT signaling. Phosphorylation on Ser-29 by SGK1 results in its activation by enhancing its interaction with MAP2K1/MEK1 and MAP2K2/MEK2. Phosphorylation at Ser-246 and Ser-248 as well as autophosphorylation at Thr-190 promote nuclear localization. Ligand-activated ALK induces tyrosine phosphorylation. Dephosphorylated by PTPRJ at Tyr-187. Dephosphorylated by DUSP1 and DUSP2 at Thr-185 and Tyr-187. In terms of processing, ISGylated. Post-translationally, ubiquitinated by TRIM15 via 'Lys-63'-linked ubiquitination; leading to activation. Deubiquitinated by CYLD.

It localises to the nucleus. The protein resides in the cytoplasm. Its subcellular location is the cytoskeleton. It is found in the microtubule organizing center. The protein localises to the centrosome. It localises to the spindle. The protein resides in the membrane. Its subcellular location is the caveola. It is found in the cell junction. The protein localises to the focal adhesion. The enzyme catalyses L-seryl-[protein] + ATP = O-phospho-L-seryl-[protein] + ADP + H(+). It carries out the reaction L-threonyl-[protein] + ATP = O-phospho-L-threonyl-[protein] + ADP + H(+). With respect to regulation, phosphorylated by MAP2K1/MEK1 and MAP2K2/MEK2 on Thr-185 and Tyr-187 in response to external stimuli like insulin or NGF. Both phosphorylations are required for activity. This phosphorylation causes dramatic conformational changes, which enable full activation and interaction of MAPK1/ERK2 with its substrates. Phosphorylation on Ser-29 by SGK1 results in its activation by enhancing its interaction with MAP2K1/MEK1 and MAP2K2/MEK2. Dephosphorylated and inactivated by DUSP1, DUSP3, DUSP6 and DUSP9. Inactivated by pyrimidylpyrrole inhibitors. Its function is as follows. Serine/threonine kinase which acts as an essential component of the MAP kinase signal transduction pathway. MAPK1/ERK2 and MAPK3/ERK1 are the 2 MAPKs which play an important role in the MAPK/ERK cascade. They participate also in a signaling cascade initiated by activated KIT and KITLG/SCF. Depending on the cellular context, the MAPK/ERK cascade mediates diverse biological functions such as cell growth, adhesion, survival and differentiation through the regulation of transcription, translation, cytoskeletal rearrangements. The MAPK/ERK cascade also plays a role in initiation and regulation of meiosis, mitosis, and postmitotic functions in differentiated cells by phosphorylating a number of transcription factors. About 160 substrates have already been discovered for ERKs. Many of these substrates are localized in the nucleus, and seem to participate in the regulation of transcription upon stimulation. However, other substrates are found in the cytosol as well as in other cellular organelles, and those are responsible for processes such as translation, mitosis and apoptosis. Moreover, the MAPK/ERK cascade is also involved in the regulation of the endosomal dynamics, including lysosome processing and endosome cycling through the perinuclear recycling compartment (PNRC); as well as in the fragmentation of the Golgi apparatus during mitosis. The substrates include transcription factors (such as ATF2, BCL6, ELK1, ERF, FOS, HSF4 or SPZ1), cytoskeletal elements (such as CANX, CTTN, GJA1, MAP2, MAPT, PXN, SORBS3 or STMN1), regulators of apoptosis (such as BAD, BTG2, CASP9, DAPK1, IER3, MCL1 or PPARG), regulators of translation (such as EIF4EBP1 and FXR1) and a variety of other signaling-related molecules (like ARHGEF2, DCC, FRS2 or GRB10). Protein kinases (such as RAF1, RPS6KA1/RSK1, RPS6KA3/RSK2, RPS6KA2/RSK3, RPS6KA6/RSK4, SYK, MKNK1/MNK1, MKNK2/MNK2, RPS6KA5/MSK1, RPS6KA4/MSK2, MAPKAPK3 or MAPKAPK5) and phosphatases (such as DUSP1, DUSP4, DUSP6 or DUSP16) are other substrates which enable the propagation the MAPK/ERK signal to additional cytosolic and nuclear targets, thereby extending the specificity of the cascade. Mediates phosphorylation of TPR in response to EGF stimulation. May play a role in the spindle assembly checkpoint. Phosphorylates PML and promotes its interaction with PIN1, leading to PML degradation. Phosphorylates CDK2AP2. Phosphorylates phosphoglycerate kinase PGK1 under hypoxic conditions to promote its targeting to the mitochondrion and suppress the formation of acetyl-coenzyme A from pyruvate. In terms of biological role, acts as a transcriptional repressor. Binds to a [GC]AAA[GC] consensus sequence. Repress the expression of interferon gamma-induced genes. Seems to bind to the promoter of CCL5, DMP1, IFIH1, IFITM1, IRF7, IRF9, LAMP3, OAS1, OAS2, OAS3 and STAT1. Transcriptional activity is independent of kinase activity. The chain is Mitogen-activated protein kinase 1 from Bos taurus (Bovine).